The chain runs to 284 residues: Tropomyosin (284 aa).

The disordered stretch occupies residues 1-38 (MEAIKKKMQAMKLEKDNAVDRAETAEQQSREAALRAEK). The stretch at 1–284 (MEAIKKKMQA…DQTFSELTGY (284 aa)) forms a coiled coil. Residues 12–38 (KLEKDNAVDRAETAEQQSREAALRAEK) are compositionally biased toward basic and acidic residues.

The protein belongs to the tropomyosin family. In terms of assembly, homodimer.

Functionally, tropomyosin, in association with the troponin complex, plays a central role in the calcium dependent regulation of muscle contraction. This chain is Tropomyosin, found in Rhipicephalus microplus (Cattle tick).